We begin with the raw amino-acid sequence, 57 residues long: COP9 signalosome complex subunit 9 (57 aa).

A Phosphothreonine modification is found at Thr-26.

The protein belongs to the CSN9 family. As to quaternary structure, component of the CSN complex, composed of COPS1/GPS1, COPS2, COPS3, COPS4, COPS5, COPS6, COPS7 (COPS7A or COPS7B), COPS8 and COPS9. In the complex, it interacts directly with COPS3, COPS5 and COPS6.

The protein localises to the nucleus. It localises to the cytoplasm. Its subcellular location is the nucleoplasm. Functionally, component of the COP9 signalosome complex (CSN), a complex involved in various cellular and developmental processes. The CSN complex is an essential regulator of the ubiquitin (Ubl) conjugation pathway by mediating the deneddylation of the cullin subunits of SCF-type E3 ligase complexes, leading to decrease the Ubl ligase activity of SCF-type complexes such as SCF, CSA or DDB2. The complex is also involved in phosphorylation of p53/TP53, c-jun/JUN, IkappaBalpha/NFKBIA, ITPK1 and IRF8/ICSBP, possibly via its association with CK2 and PKD kinases. CSN-dependent phosphorylation of TP53 and JUN promotes and protects degradation by the Ubl system, respectively. Plays a role in cell proliferation. The protein is COP9 signalosome complex subunit 9 of Mus musculus (Mouse).